The sequence spans 121 residues: Large ribosomal subunit protein bL12 (121 aa).

The protein belongs to the bacterial ribosomal protein bL12 family. Homodimer. Part of the ribosomal stalk of the 50S ribosomal subunit. Forms a multimeric L10(L12)X complex, where L10 forms an elongated spine to which 2 to 4 L12 dimers bind in a sequential fashion. Binds GTP-bound translation factors.

In terms of biological role, forms part of the ribosomal stalk which helps the ribosome interact with GTP-bound translation factors. Is thus essential for accurate translation. The sequence is that of Large ribosomal subunit protein bL12 from Ureaplasma urealyticum serovar 10 (strain ATCC 33699 / Western).